The sequence spans 278 residues: Non-haem bromoperoxidase BPO-A2 (278 aa).

The 239-residue stretch at 26 to 264 (PVVLIHGFPL…GAPHGLLWTH (239 aa)) folds into the AB hydrolase-1 domain. Residues Ser-99, Asp-229, and His-258 contribute to the active site.

The protein belongs to the AB hydrolase superfamily. Bacterial non-heme haloperoxidase / perhydrolase family. In terms of assembly, homotrimer.

Its function is as follows. May be a chlorinating enzyme involved in 7-chlorotetracycline biosynthesis. The chain is Non-haem bromoperoxidase BPO-A2 (bpoA2) from Kitasatospora aureofaciens (Streptomyces aureofaciens).